We begin with the raw amino-acid sequence, 522 residues long: Sorting nexin-1 (522 aa).

Disordered stretches follow at residues 1 to 84 (MASG…QDQE) and 115 to 142 (SLPPQEATNSSKPQPTYEELEEEEQEDQ). Ser-32 and Ser-39 each carry phosphoserine. Positions 35–45 (EAGDSDTEGED) are enriched in acidic residues. Residues Thr-41 and Thr-48 each carry the phosphothreonine modification. The span at 55-73 (KHQSPKITTSLLPINNGSK) shows a compositional bias: polar residues. Residues Ser-58 and Ser-72 each carry the phosphoserine modification. The span at 132 to 142 (EELEEEEQEDQ) shows a compositional bias: acidic residues. The PX domain occupies 143–272 (FDLTVGITDP…EFLEKEELPR (130 aa)). Arg-186, Ser-188, and Lys-214 together coordinate a 1,2-diacyl-sn-glycero-3-phospho-(1D-myo-inositol-3-phosphate). Ser-188 carries the post-translational modification Phosphoserine. Position 237 is an N6-acetyllysine (Lys-237). Residue Arg-238 coordinates a 1,2-diacyl-sn-glycero-3-phospho-(1D-myo-inositol-3-phosphate). A Phosphoserine modification is found at Ser-280. The tract at residues 281–298 (GAGLLKMFNKATDAVSKM) is membrane-binding amphipathic helix. Positions 302–522 (MNESDIWFEE…AFLPEAKAIS (221 aa)) constitute a BAR domain.

The protein belongs to the sorting nexin family. In terms of assembly, predominantly forms heterodimers with BAR domain-containing sorting nexins SNX5, SNX6 and SNX32; can self-associate to form homodimers. The heterodimers are proposed to self-assemble into helical arrays on the membrane to stabilize and expand local membrane curvature underlying endosomal tubule formation. Thought to be a component of the originally described retromer complex (also called SNX-BAR retromer) which is a pentamer containing the heterotrimeric retromer cargo-selective complex (CSC), also described as vacuolar protein sorting subcomplex (VPS) and a heterodimeric membrane-deforming subcomplex formed between SNX1 or SNX2 and SNX5 or SNX6 (also called SNX-BAR subcomplex); the respective CSC and SNX-BAR subcomplexes associate with low affinity. Interacts with SNX5, SNX6, SNX32, VPS26A, VPS29, VPS35, DRD5, DENND5A, KALRN, RHOG (GDP-bound form). The interaction with SNX2 is reported controversially. Interacts with DNAJC13; prevented by presence of HGS. Interacts with HGS.

The protein resides in the endosome membrane. Its subcellular location is the golgi apparatus. It localises to the trans-Golgi network membrane. It is found in the early endosome membrane. The protein localises to the cell projection. The protein resides in the lamellipodium. Its function is as follows. Involved in several stages of intracellular trafficking. Interacts with membranes containing phosphatidylinositol 3-phosphate (PtdIns(3P)) or phosphatidylinositol 3,5-bisphosphate (PtdIns(3,5)P2). Acts in part as component of the retromer membrane-deforming SNX-BAR subcomplex. The SNX-BAR retromer mediates retrograde transport of cargo proteins from endosomes to the trans-Golgi network (TGN) and is involved in endosome-to-plasma membrane transport for cargo protein recycling. The SNX-BAR subcomplex functions to deform the donor membrane into a tubular profile called endosome-to-TGN transport carrier (ETC). Can sense membrane curvature and has in vitro vesicle-to-membrane remodeling activity. Involved in retrograde endosome-to-TGN transport of lysosomal enzyme receptors (IGF2R, M6PR and SORT1) and Shiginella dysenteria toxin stxB. Plays a role in targeting ligand-activated EGFR to the lysosomes for degradation after endocytosis from the cell surface and release from the Golgi. Involvement in retromer-independent endocytic trafficking of P2RY1 and lysosomal degradation of protease-activated receptor-1/F2R. Promotes KALRN- and RHOG-dependent but retromer-independent membrane remodeling such as lamellipodium formation; the function is dependent on GEF activity of KALRN. Required for endocytosis of DRD5 upon agonist stimulation but not for basal receptor trafficking. This chain is Sorting nexin-1 (SNX1), found in Homo sapiens (Human).